Here is a 364-residue protein sequence, read N- to C-terminus: Appendage-associated protein (364 aa).

2 coiled-coil regions span residues 142-196 and 288-313; these read IIHE…AECR and RIAQAELAAAADALKRAADKLQALGK.

The protein resides in the secreted. In terms of biological role, associates with actin filament appendages that are formed in the inclusion appendages of the parasitophorous vacuole during infection of the host erythrocyte. The chain is Appendage-associated protein from Anaplasma marginale (strain Illinois).